The sequence spans 160 residues: MAFTFAAFCYMLTLVLCASLIFFVIWHIIAFDELRTDFKNPIDQGNPARARERLKNIERICCLLRKLVVPEYCIHGLFCLMFLCAAEWVTLGLNLPLLLYHLWRYFHRPSDGSEGLFDAVSIMDADILGYCQKEAWCKLAFYLLSFFYYLYSMVYTLVSF.

Topologically, residues 1 to 10 (MAFTFAAFCY) are cytoplasmic. The chain crosses the membrane as a helical span at residues 11–31 (MLTLVLCASLIFFVIWHIIAF). The Lumenal portion of the chain corresponds to 32–72 (DELRTDFKNPIDQGNPARARERLKNIERICCLLRKLVVPEY). The chain crosses the membrane as a helical span at residues 73-93 (CIHGLFCLMFLCAAEWVTLGL). The Cytoplasmic portion of the chain corresponds to 94–138 (NLPLLLYHLWRYFHRPSDGSEGLFDAVSIMDADILGYCQKEAWCK). A helical membrane pass occupies residues 139 to 159 (LAFYLLSFFYYLYSMVYTLVS). A topological domain (lumenal) is located at residue Phe-160.

It belongs to the cornichon family. As to quaternary structure, interacts with HBEGF. As to expression, expressed in the odd-numbered neuromeres (r3 and r5) of the developing hindbrain.

The protein resides in the membrane. In terms of biological role, regulates the trafficking and gating properties of AMPA-selective glutamate receptors (AMPARs). Plays an important role in the proper development of cranial nerves by facilitating the secretion of HBEGF. In Gallus gallus (Chicken), this protein is Protein cornichon homolog 2 (CNIH2).